A 306-amino-acid polypeptide reads, in one-letter code: Putative secretory carrier-associated membrane protein 1 (306 aa).

The segment at 1–60 (MAGRYDSNPFEEDDVNPFSEQARGKAGGQPSYGGGAFYMPNPRNVPSMSSNSRLSPLPPE) is disordered. The Cytoplasmic segment spans residues 1–141 (MAGRYDSNPF…EIPSHLQRMQ (141 aa)). Residues 25–36 (KAGGQPSYGGGA) are compositionally biased toward gly residues. The span at 44-54 (NVPSMSSNSRL) shows a compositional bias: polar residues. The stretch at 72–109 (LDSSKDLKNREKELQAREAELNKREKELKRREEAAARA) forms a coiled coil. 4 helical membrane passes run 142 to 162 (YVAF…VIAV), 174 to 194 (IWLL…VLWY), 209 to 229 (FGLF…SAVA), and 257 to 277 (IFYF…IWVI). Residues 278–306 (QQVYMYFRGSGKAAEMKRDATRGAMRAAF) are Cytoplasmic-facing.

This sequence belongs to the SCAMP family.

The protein resides in the cell membrane. It is found in the cytoplasmic vesicle. The protein localises to the secretory vesicle membrane. Probably involved in membrane trafficking. The protein is Putative secretory carrier-associated membrane protein 1 (SCAMP1) of Oryza sativa subsp. indica (Rice).